A 198-amino-acid polypeptide reads, in one-letter code: V-type proton ATPase subunit E (198 aa).

The protein belongs to the V-ATPase E subunit family.

Produces ATP from ADP in the presence of a proton gradient across the membrane. The sequence is that of V-type proton ATPase subunit E from Borrelia hermsii (strain HS1 / DAH).